The primary structure comprises 483 residues: MTAAVTENNGAGSGSSVAGRVVRVIGPVVDVEFPRGAIPELFNALHAEITLPSVAKTLTLEVAQHLGDNLVRTVSMQPTDGLIRGTSVSDTGKPISVPVGDVVKGHVFNALGDCLDAPGTGRDGEQWGIHRKPPAFDQLEGKTEILETGIKVIDLLTPYVKGGKIGLFGGAGVGKTVLIQEMITRIAREFSGTSVFAGVGERTREGTDLHLEMEEMGVLQDTALVFGQMDEPPGTRMRVALSALTMAEYFRDVQGQDVLLFIDNIFRFTQAGSEVSTLLGRMPSAVGYQPTLADEMGELQERITSTRGRSITSLQAIYVPADDYTDPAPATTFAHLDATTELSRPISQMGIYPAVDPLTSTSRILEPGIVGAEHFRVANEVKRILQKYKELQDIIAILGMDELQEEDKVLVGRARRLQKFLGQNFIVAEKFTGEPGSVVPLRDTIEAFDRICKGEFDHLPEQAFNSCGGLDDVEAAAKKIAGK.

169–176 (GGAGVGKT) is a binding site for ATP.

It belongs to the ATPase alpha/beta chains family. F-type ATPases have 2 components, CF(1) - the catalytic core - and CF(0) - the membrane proton channel. CF(1) has five subunits: alpha(3), beta(3), gamma(1), delta(1), epsilon(1). CF(0) has three main subunits: a(1), b(2) and c(9-12). The alpha and beta chains form an alternating ring which encloses part of the gamma chain. CF(1) is attached to CF(0) by a central stalk formed by the gamma and epsilon chains, while a peripheral stalk is formed by the delta and b chains.

The protein resides in the cell membrane. It catalyses the reaction ATP + H2O + 4 H(+)(in) = ADP + phosphate + 5 H(+)(out). Its function is as follows. Produces ATP from ADP in the presence of a proton gradient across the membrane. The catalytic sites are hosted primarily by the beta subunits. This Rhodococcus jostii (strain RHA1) protein is ATP synthase subunit beta.